The primary structure comprises 128 residues: UPF0102 protein Mext_0406 (128 aa).

This sequence belongs to the UPF0102 family.

The sequence is that of UPF0102 protein Mext_0406 from Methylorubrum extorquens (strain PA1) (Methylobacterium extorquens).